A 901-amino-acid chain; its full sequence is DNA mismatch repair protein MutS (901 aa).

Residues 1–12 (MKYSASTSTPKS) show a composition bias toward polar residues. Positions 1–25 (MKYSASTSTPKSAQPKEEELENSLP) are disordered. 679–686 (GPNASGKS) lines the ATP pocket.

The protein belongs to the DNA mismatch repair MutS family.

Functionally, this protein is involved in the repair of mismatches in DNA. It is possible that it carries out the mismatch recognition step. This protein has a weak ATPase activity. The polypeptide is DNA mismatch repair protein MutS (Trichodesmium erythraeum (strain IMS101)).